The sequence spans 185 residues: Kunitz-type serine protease inhibitor DrTI (185 aa).

Disulfide bonds link C44-C89 and C139-C147.

The protein belongs to the protease inhibitor I3 (leguminous Kunitz-type inhibitor) family.

The protein localises to the secreted. In terms of biological role, inhibits bovine trypsin and human plasma kallikrein. The chain is Kunitz-type serine protease inhibitor DrTI from Delonix regia (Royal poinciana).